Consider the following 245-residue polypeptide: Biosynthetic peptidoglycan transglycosylase (245 aa).

A helical membrane pass occupies residues 20-42; the sequence is VYAGSVFAGAWLATQLFYLVQIA.

The protein belongs to the glycosyltransferase 51 family.

Its subcellular location is the cell inner membrane. It carries out the reaction [GlcNAc-(1-&gt;4)-Mur2Ac(oyl-L-Ala-gamma-D-Glu-L-Lys-D-Ala-D-Ala)](n)-di-trans,octa-cis-undecaprenyl diphosphate + beta-D-GlcNAc-(1-&gt;4)-Mur2Ac(oyl-L-Ala-gamma-D-Glu-L-Lys-D-Ala-D-Ala)-di-trans,octa-cis-undecaprenyl diphosphate = [GlcNAc-(1-&gt;4)-Mur2Ac(oyl-L-Ala-gamma-D-Glu-L-Lys-D-Ala-D-Ala)](n+1)-di-trans,octa-cis-undecaprenyl diphosphate + di-trans,octa-cis-undecaprenyl diphosphate + H(+). Its pathway is cell wall biogenesis; peptidoglycan biosynthesis. Its function is as follows. Peptidoglycan polymerase that catalyzes glycan chain elongation from lipid-linked precursors. This Burkholderia ambifaria (strain ATCC BAA-244 / DSM 16087 / CCUG 44356 / LMG 19182 / AMMD) (Burkholderia cepacia (strain AMMD)) protein is Biosynthetic peptidoglycan transglycosylase.